The following is a 705-amino-acid chain: MLTPIIRKFQYGQHTLTIETGMMARQATAAVMVSMDDTAVFVTVVGQKKAKPGQSFFPLTVNYQERTYAAGRIPGSFFRREGRPSEGETLTSRLIDRPIRPLFPDSFLNEVQVIATVVSLNPQVNPDIVAMIGASAALSLSGIPFNGPIGSARVGYINNQYVLNPTSDELKESSLDLVVAGTAGAVLMVESEADVLSEDQMLGAVVFGHEQQQIVIENINSLVAEAGKAKWDWQAPAVNEALHARVAELAEGRLGDAYHITEKQERYAQVDAIKSSVVETLLAQDETLDVSEIQDILGSVEKNVVRSRVLRGEPRIDGREKDMIRGLDVRTGVLPRTHGSALFTRGETQALVTATLGTARDAQNLDELMGEKTDSFLFHYNFPPYSVGETGMVGSPKRREIGHGRLAKRGVLAMMPKPEDFPYTVRVVSEITESNGSSSMASVCGASLALMDAGVPIKAAVAGIAMGLVKEQDNFVVLSDILGDEDHLGDMDFKVAGSRDGITALQMDIKIEGITREIMQVALNQAKGARLHILGVMEQAISTPRGDISQFAPRIHTIRINPDKIKDVIGKGGSVIRALTEETGTTIEIEDDGTVKIAATDGEKAKFAIRRIEEITAEIEVGRIYQGKVTRIVDFGAFVAIGGGKEGLVHISQIADKRVEKVTDYLQMGQEVPVKVLEVDRQGRVRLSIKEATAPEAGSPAPEAE.

Mg(2+) is bound by residues Asp-486 and Asp-492. One can recognise a KH domain in the interval 553 to 612 (PRIHTIRINPDKIKDVIGKGGSVIRALTEETGTTIEIEDDGTVKIAATDGEKAKFAIRRI). One can recognise an S1 motif domain in the interval 622-690 (GRIYQGKVTR…RQGRVRLSIK (69 aa)).

The protein belongs to the polyribonucleotide nucleotidyltransferase family. As to quaternary structure, component of the RNA degradosome, which is a multiprotein complex involved in RNA processing and mRNA degradation. Mg(2+) is required as a cofactor.

The protein localises to the cytoplasm. The catalysed reaction is RNA(n+1) + phosphate = RNA(n) + a ribonucleoside 5'-diphosphate. Functionally, involved in mRNA degradation. Catalyzes the phosphorolysis of single-stranded polyribonucleotides processively in the 3'- to 5'-direction. This Serratia proteamaculans (strain 568) protein is Polyribonucleotide nucleotidyltransferase.